A 375-amino-acid polypeptide reads, in one-letter code: Growth/differentiation factor 8 (375 aa).

The signal sequence occupies residues 1–18; that stretch reads MQKLQISVYIYLFMLIVA. A propeptide spanning residues 19–266 is cleaved from the precursor; the sequence is GPVDLNENSE…VTDTPKRSRR (248 aa). N-linked (GlcNAc...) asparagine glycosylation is found at N47 and N71. Disulfide bonds link C272–C282, C281–C340, C309–C372, and C313–C374.

Belongs to the TGF-beta family. In terms of assembly, homodimer; disulfide-linked. Interacts with WFIKKN2, leading to inhibit its activity. Interacts with FSTL3. Synthesized as large precursor molecule that undergoes proteolytic cleavage to generate an N-terminal propeptide and a disulfide linked C-terminal dimer, which is the biologically active molecule. The circulating form consists of a latent complex of the C-terminal dimer and other proteins, including its propeptide, which maintain the C-terminal dimer in a latent, inactive state. Ligand activation requires additional cleavage of the prodomain by a tolloid-like metalloproteinase.

It is found in the secreted. Its function is as follows. Acts specifically as a negative regulator of skeletal muscle growth. This Bubalus bubalis (Domestic water buffalo) protein is Growth/differentiation factor 8 (MSTN).